We begin with the raw amino-acid sequence, 372 residues long: Phospho-N-acetylmuramoyl-pentapeptide-transferase (372 aa).

A run of 10 helical transmembrane segments spans residues leucine 2–leucine 22, threonine 71–alanine 91, valine 98–leucine 118, tyrosine 134–leucine 154, methionine 176–isoleucine 196, glycine 211–serine 231, valine 251–histidine 271, valine 275–methionine 295, isoleucine 300–valine 320, and glutamine 349–leucine 369.

The protein belongs to the glycosyltransferase 4 family. MraY subfamily. Mg(2+) is required as a cofactor.

The protein localises to the cell inner membrane. It carries out the reaction UDP-N-acetyl-alpha-D-muramoyl-L-alanyl-gamma-D-glutamyl-meso-2,6-diaminopimeloyl-D-alanyl-D-alanine + di-trans,octa-cis-undecaprenyl phosphate = di-trans,octa-cis-undecaprenyl diphospho-N-acetyl-alpha-D-muramoyl-L-alanyl-D-glutamyl-meso-2,6-diaminopimeloyl-D-alanyl-D-alanine + UMP. It participates in cell wall biogenesis; peptidoglycan biosynthesis. Functionally, catalyzes the initial step of the lipid cycle reactions in the biosynthesis of the cell wall peptidoglycan: transfers peptidoglycan precursor phospho-MurNAc-pentapeptide from UDP-MurNAc-pentapeptide onto the lipid carrier undecaprenyl phosphate, yielding undecaprenyl-pyrophosphoryl-MurNAc-pentapeptide, known as lipid I. This is Phospho-N-acetylmuramoyl-pentapeptide-transferase from Psychrobacter cryohalolentis (strain ATCC BAA-1226 / DSM 17306 / VKM B-2378 / K5).